The sequence spans 325 residues: MSEAESESRAGREEVWIEKYRPQTLDDVMGHENIVGRLKSYVSRNDLSHMLFSGPAGTGKTTCATAIARELYGDDWREHFLELNASDERGIDVVRDRIKNFARTSFGGVEYRIIFLDEADALTSDAQSALRRTMEQFSNNVRFILSCNYSSQIIDPIQSRCAVFRFSPLADDAVAEEIRTIAAEEDIELTEDGLDALVYAADGDMRKAINGLQAASVSGDTVDESAVYAITSTARPEEIRTMVQSALDGDFTASRATLDRLLTEEGIAGGDIIDQLHRSIWEFDIDDDAAVRVLERIGETDYRITRGANERVQLEAMLASLAQGE.

Position 54-61 (54-61) interacts with ATP; it reads GPAGTGKT.

It belongs to the activator 1 small subunits family. RfcS subfamily. As to quaternary structure, heteromultimer composed of small subunits (RfcS) and large subunits (RfcL).

In terms of biological role, part of the RFC clamp loader complex which loads the PCNA sliding clamp onto DNA. The chain is Replication factor C small subunit from Haloarcula marismortui (strain ATCC 43049 / DSM 3752 / JCM 8966 / VKM B-1809) (Halobacterium marismortui).